A 359-amino-acid chain; its full sequence is WAT1-related protein At4g16620 (359 aa).

The next 10 membrane-spanning stretches (helical) occupy residues 5 to 25 (ETLI…IYAG), 41 to 61 (LLIV…LAFL), 77 to 97 (IKLV…FLEG), 105 to 125 (MATA…WAAG), 143 to 163 (TVLC…TATL), 183 to 203 (ILGC…IVLQ), 206 to 226 (ILAE…MGGI), 246 to 266 (VIGL…SGGG), 279 to 299 (PVIV…VSAF), and 305 to 325 (FNLG…FVLW). The 125-residue stretch at 30–154 (LSQLLSLGID…LCVMGALIMS (125 aa)) folds into the EamA 1 domain. The region spanning 206 to 324 (ILAEFPAPIS…LMFGGLYFVL (119 aa)) is the EamA 2 domain.

It belongs to the drug/metabolite transporter (DMT) superfamily. Plant drug/metabolite exporter (P-DME) (TC 2.A.7.4) family.

It is found in the membrane. This is WAT1-related protein At4g16620 from Arabidopsis thaliana (Mouse-ear cress).